The sequence spans 391 residues: Methylthioribose-1-phosphate isomerase (391 aa).

Aspartate 267 (proton donor) is an active-site residue.

This sequence belongs to the eIF-2B alpha/beta/delta subunits family. MtnA subfamily.

It is found in the cytoplasm. It localises to the nucleus. It catalyses the reaction 5-(methylsulfanyl)-alpha-D-ribose 1-phosphate = 5-(methylsulfanyl)-D-ribulose 1-phosphate. It functions in the pathway amino-acid biosynthesis; L-methionine biosynthesis via salvage pathway; L-methionine from S-methyl-5-thio-alpha-D-ribose 1-phosphate: step 1/6. In terms of biological role, catalyzes the interconversion of methylthioribose-1-phosphate (MTR-1-P) into methylthioribulose-1-phosphate (MTRu-1-P). The sequence is that of Methylthioribose-1-phosphate isomerase from Ajellomyces capsulatus (strain NAm1 / WU24) (Darling's disease fungus).